Consider the following 532-residue polypeptide: Phosphoenolpyruvate carboxykinase (ATP) (532 aa).

3 residues coordinate substrate: arginine 60, tyrosine 200, and lysine 206. Residues lysine 206, histidine 225, and 242 to 250 (GLSGTGKTT) each bind ATP. The Mn(2+) site is built by lysine 206 and histidine 225. A substrate-binding site is contributed by serine 244. Aspartate 263 serves as a coordination point for Mn(2+). ATP is bound by residues glutamate 291, arginine 327, 443–444 (RI), and threonine 449. Arginine 327 is a substrate binding site.

The protein belongs to the phosphoenolpyruvate carboxykinase (ATP) family. In terms of assembly, monomer. Mn(2+) serves as cofactor.

It is found in the cytoplasm. The catalysed reaction is oxaloacetate + ATP = phosphoenolpyruvate + ADP + CO2. The protein operates within carbohydrate biosynthesis; gluconeogenesis. Its activity is regulated as follows. Inhibited by p-chloromercuribenzoate. In terms of biological role, involved in gluconeogenesis. Catalyzes the conversion of oxaloacetate (OAA) to phosphoenolpyruvate (PEP) through direct phosphoryl transfer between the nucleoside triphosphate and OAA. The chain is Phosphoenolpyruvate carboxykinase (ATP) from Anaerobiospirillum succiniciproducens.